A 216-amino-acid chain; its full sequence is LexA repressor (216 aa).

Positions 29-49 form a DNA-binding region, H-T-H motif; sequence RAEIAQALGFRSPNAAEDHLK. Active-site for autocatalytic cleavage activity residues include Ser-134 and Lys-171.

The protein belongs to the peptidase S24 family. As to quaternary structure, homodimer.

The catalysed reaction is Hydrolysis of Ala-|-Gly bond in repressor LexA.. Represses a number of genes involved in the response to DNA damage (SOS response), including recA and lexA. In the presence of single-stranded DNA, RecA interacts with LexA causing an autocatalytic cleavage which disrupts the DNA-binding part of LexA, leading to derepression of the SOS regulon and eventually DNA repair. The protein is LexA repressor of Bordetella bronchiseptica (strain ATCC BAA-588 / NCTC 13252 / RB50) (Alcaligenes bronchisepticus).